We begin with the raw amino-acid sequence, 907 residues long: Dual serine/threonine and tyrosine protein kinase (907 aa).

The stretch at 373–409 (RKKENELYESLMNIANRKQEEMKDMIVETLNTMKEEL) forms a coiled coil. Positions 630–884 (PKLGQELGRG…PLLGIVQPML (255 aa)) constitute a Protein kinase domain. Residues 636–644 (LGRGQYGVV) and lysine 659 each bind ATP. Aspartate 755 acts as the Proton acceptor in catalysis.

It belongs to the protein kinase superfamily. Ser/Thr protein kinase family.

The protein localises to the cytoplasm. Its subcellular location is the cell membrane. It is found in the apical cell membrane. The protein resides in the basolateral cell membrane. It localises to the cell junction. The catalysed reaction is L-seryl-[protein] + ATP = O-phospho-L-seryl-[protein] + ADP + H(+). The enzyme catalyses L-threonyl-[protein] + ATP = O-phospho-L-threonyl-[protein] + ADP + H(+). It carries out the reaction L-tyrosyl-[protein] + ATP = O-phospho-L-tyrosyl-[protein] + ADP + H(+). In terms of biological role, acts as a positive regulator of ERK phosphorylation downstream of fibroblast growth factor-receptor activation. Involved in the regulation of both caspase-dependent apoptosis and caspase-independent cell death. In the skin, it plays a predominant role in suppressing caspase-dependent apoptosis in response to UV stress in a range of dermal cell types. The chain is Dual serine/threonine and tyrosine protein kinase from Macaca mulatta (Rhesus macaque).